The sequence spans 124 residues: Fluoride-specific ion channel FluC (124 aa).

The next 4 membrane-spanning stretches (helical) occupy residues 4-24 (FLAV…LGLW), 34-54 (LGTL…LAWF), 67-87 (FVIT…AEVV), and 100-120 (LIAF…FYSL). Residues G74 and T77 each coordinate Na(+).

Belongs to the fluoride channel Fluc/FEX (TC 1.A.43) family.

The protein resides in the cell inner membrane. It catalyses the reaction fluoride(in) = fluoride(out). With respect to regulation, na(+) is not transported, but it plays an essential structural role and its presence is essential for fluoride channel function. In terms of biological role, fluoride-specific ion channel. Important for reducing fluoride concentration in the cell, thus reducing its toxicity. This is Fluoride-specific ion channel FluC from Thiobacillus denitrificans (strain ATCC 25259 / T1).